Here is a 333-residue protein sequence, read N- to C-terminus: Ketol-acid reductoisomerase (NADP(+)) (333 aa).

The KARI N-terminal Rossmann domain maps to 1–171 (MSNHTQPKIA…GGARANIIKT (171 aa)). NADP(+)-binding positions include 14 to 17 (YGSQ), R37, T42, and 72 to 75 (DMVQ). Residue H97 is part of the active site. G123 is an NADP(+) binding site. The KARI C-terminal knotted domain maps to 172 to 317 (TFKEETETDL…KKLRAKMVWL (146 aa)). 4 residues coordinate Mg(2+): D180, E184, E216, and E220. Residue S241 participates in substrate binding.

The protein belongs to the ketol-acid reductoisomerase family. The cofactor is Mg(2+).

The catalysed reaction is (2R)-2,3-dihydroxy-3-methylbutanoate + NADP(+) = (2S)-2-acetolactate + NADPH + H(+). The enzyme catalyses (2R,3R)-2,3-dihydroxy-3-methylpentanoate + NADP(+) = (S)-2-ethyl-2-hydroxy-3-oxobutanoate + NADPH + H(+). It functions in the pathway amino-acid biosynthesis; L-isoleucine biosynthesis; L-isoleucine from 2-oxobutanoate: step 2/4. Its pathway is amino-acid biosynthesis; L-valine biosynthesis; L-valine from pyruvate: step 2/4. Functionally, involved in the biosynthesis of branched-chain amino acids (BCAA). Catalyzes an alkyl-migration followed by a ketol-acid reduction of (S)-2-acetolactate (S2AL) to yield (R)-2,3-dihydroxy-isovalerate. In the isomerase reaction, S2AL is rearranged via a Mg-dependent methyl migration to produce 3-hydroxy-3-methyl-2-ketobutyrate (HMKB). In the reductase reaction, this 2-ketoacid undergoes a metal-dependent reduction by NADPH to yield (R)-2,3-dihydroxy-isovalerate. The polypeptide is Ketol-acid reductoisomerase (NADP(+)) (Xanthomonas axonopodis pv. citri (strain 306)).